The primary structure comprises 337 residues: MTQVFQGRSFLAEKDFTRAELEYLIDFSAHLKDLKKRGVPHHYLEGKNIALLFEKTSTRTRAAFTTAAIDLGAHPEYLGANDIQLGKKESTEDTAKVLGRMFDGIEFRGFSQRMVEELAEFSGVPVWNGLTDEWHPTQMLADYLTVKENFGKLEGLTLVYCGDGRNNVANSLLVTGAILGVNVHIFSPKELFPEEEIVTLAEGYAKESGARILITEDADEAVKGADVLYTDVWVSMGEEDKFKERVELLQPYQVNMDLVQKAGNDKLIFLHCLPAFHDTNTVYGKDVAEKFGVKEMEVTDEVFRSKYARHFDQAENRMHTIKAVMAATLGNLFIPKV.

Carbamoyl phosphate is bound by residues 57 to 60 (STRT), Gln-84, Arg-108, and 135 to 138 (HPTQ). L-ornithine is bound by residues Asn-167, Asp-231, and 235-236 (SM). Carbamoyl phosphate-binding positions include 272–273 (CL) and Arg-317.

Belongs to the aspartate/ornithine carbamoyltransferase superfamily. OTCase family.

Its subcellular location is the cytoplasm. The enzyme catalyses carbamoyl phosphate + L-ornithine = L-citrulline + phosphate + H(+). Its pathway is amino-acid degradation; L-arginine degradation via ADI pathway; carbamoyl phosphate from L-arginine: step 2/2. Its function is as follows. Reversibly catalyzes the transfer of the carbamoyl group from carbamoyl phosphate (CP) to the N(epsilon) atom of ornithine (ORN) to produce L-citrulline. The sequence is that of Ornithine carbamoyltransferase, catabolic (arcB) from Streptococcus pyogenes serotype M1.